The primary structure comprises 161 residues: Probable chemoreceptor glutamine deamidase CheD (161 aa).

It belongs to the CheD family.

The catalysed reaction is L-glutaminyl-[protein] + H2O = L-glutamyl-[protein] + NH4(+). Probably deamidates glutamine residues to glutamate on methyl-accepting chemotaxis receptors (MCPs), playing an important role in chemotaxis. The protein is Probable chemoreceptor glutamine deamidase CheD of Lachnoclostridium phytofermentans (strain ATCC 700394 / DSM 18823 / ISDg) (Clostridium phytofermentans).